The primary structure comprises 83 residues: Small ribosomal subunit protein uS17c (83 aa).

The protein belongs to the universal ribosomal protein uS17 family. In terms of assembly, part of the 30S ribosomal subunit.

The protein localises to the plastid. It is found in the chloroplast. Functionally, one of the primary rRNA binding proteins, it binds specifically to the 5'-end of 16S ribosomal RNA. The protein is Small ribosomal subunit protein uS17c (rps17) of Porphyra purpurea (Red seaweed).